The following is a 293-amino-acid chain: Inhibitory synaptic factor 1 (293 aa).

The disordered stretch occupies residues 1 to 26 (MNIRGAPDLGQPSDDPSSGGERERIR). Residues 30 to 63 (KMVIGQLEGILRELKEVAKELREVVSQIDKLTSD) adopt a coiled-coil conformation. Disordered stretches follow at residues 120-186 (TPSD…RERV) and 200-293 (DDEE…RGKN). The span at 171–180 (VKSQLPQRTP) shows a compositional bias: polar residues. Acidic residues predominate over residues 200–215 (DDEEGDGEQEVEEEEV). 2 stretches are compositionally biased toward polar residues: residues 243–256 (SPLTSRHSGSTLAP) and 264–286 (RNSSTQTVSDKSTQTVLPYTATR).

The protein belongs to the INSYN1 family. Interacts with GPHN.

Its subcellular location is the postsynaptic density. Component of the protein machinery at the inhibitory synapses, probably acting as a scaffold. Inhibitory synapses dampen neuronal activity through postsynaptic hyperpolarization. This synaptic inhibition is fundamental for the functioning of the central nervous system, shaping and orchestrating the flow of information through neuronal networks to generate a precise neural code. This is Inhibitory synaptic factor 1 from Homo sapiens (Human).